Reading from the N-terminus, the 142-residue chain is uncharacterized protein (142 aa).

In terms of assembly, homodimer.

This is an uncharacterized protein from Bacillus subtilis (strain 168).